A 203-amino-acid chain; its full sequence is Ribosomal RNA large subunit methyltransferase E (203 aa).

Glycine 60, tryptophan 62, aspartate 79, aspartate 95, and aspartate 119 together coordinate S-adenosyl-L-methionine. Lysine 159 serves as the catalytic Proton acceptor.

The protein belongs to the class I-like SAM-binding methyltransferase superfamily. RNA methyltransferase RlmE family.

Its subcellular location is the cytoplasm. It catalyses the reaction uridine(2552) in 23S rRNA + S-adenosyl-L-methionine = 2'-O-methyluridine(2552) in 23S rRNA + S-adenosyl-L-homocysteine + H(+). Functionally, specifically methylates the uridine in position 2552 of 23S rRNA at the 2'-O position of the ribose in the fully assembled 50S ribosomal subunit. This Pelagibacter ubique (strain HTCC1062) protein is Ribosomal RNA large subunit methyltransferase E.